The following is a 398-amino-acid chain: 4-hydroxy-3-methylbut-2-en-1-yl diphosphate synthase (ferredoxin) (398 aa).

[4Fe-4S] cluster-binding residues include C306, C309, C340, and E347.

The protein belongs to the IspG family. [4Fe-4S] cluster serves as cofactor.

The catalysed reaction is (2E)-4-hydroxy-3-methylbut-2-enyl diphosphate + 2 oxidized [2Fe-2S]-[ferredoxin] + H2O = 2-C-methyl-D-erythritol 2,4-cyclic diphosphate + 2 reduced [2Fe-2S]-[ferredoxin] + H(+). The protein operates within isoprenoid biosynthesis; isopentenyl diphosphate biosynthesis via DXP pathway; isopentenyl diphosphate from 1-deoxy-D-xylulose 5-phosphate: step 5/6. In terms of biological role, converts 2C-methyl-D-erythritol 2,4-cyclodiphosphate (ME-2,4cPP) into 1-hydroxy-2-methyl-2-(E)-butenyl 4-diphosphate. The protein is 4-hydroxy-3-methylbut-2-en-1-yl diphosphate synthase (ferredoxin) of Parasynechococcus marenigrum (strain WH8102).